Reading from the N-terminus, the 257-residue chain is Imidazole glycerol phosphate synthase subunit HisF (257 aa).

Residues Asp12 and Asp131 contribute to the active site.

It belongs to the HisA/HisF family. In terms of assembly, heterodimer of HisH and HisF.

The protein resides in the cytoplasm. It catalyses the reaction 5-[(5-phospho-1-deoxy-D-ribulos-1-ylimino)methylamino]-1-(5-phospho-beta-D-ribosyl)imidazole-4-carboxamide + L-glutamine = D-erythro-1-(imidazol-4-yl)glycerol 3-phosphate + 5-amino-1-(5-phospho-beta-D-ribosyl)imidazole-4-carboxamide + L-glutamate + H(+). Its pathway is amino-acid biosynthesis; L-histidine biosynthesis; L-histidine from 5-phospho-alpha-D-ribose 1-diphosphate: step 5/9. Functionally, IGPS catalyzes the conversion of PRFAR and glutamine to IGP, AICAR and glutamate. The HisF subunit catalyzes the cyclization activity that produces IGP and AICAR from PRFAR using the ammonia provided by the HisH subunit. This chain is Imidazole glycerol phosphate synthase subunit HisF, found in Kineococcus radiotolerans (strain ATCC BAA-149 / DSM 14245 / SRS30216).